We begin with the raw amino-acid sequence, 85 residues long: Small ribosomal subunit protein uS17 (85 aa).

It belongs to the universal ribosomal protein uS17 family. As to quaternary structure, part of the 30S ribosomal subunit.

In terms of biological role, one of the primary rRNA binding proteins, it binds specifically to the 5'-end of 16S ribosomal RNA. This chain is Small ribosomal subunit protein uS17, found in Aggregatibacter actinomycetemcomitans (Actinobacillus actinomycetemcomitans).